The chain runs to 147 residues: Cyanate hydratase (147 aa).

Catalysis depends on residues Arg-88, Glu-91, and Ser-114.

It belongs to the cyanase family.

The catalysed reaction is cyanate + hydrogencarbonate + 3 H(+) = NH4(+) + 2 CO2. Functionally, catalyzes the reaction of cyanate with bicarbonate to produce ammonia and carbon dioxide. The sequence is that of Cyanate hydratase from Variovorax paradoxus (strain S110).